The chain runs to 418 residues: AP-3 complex subunit mu-1 (418 aa).

The 242-residue stretch at 176-417 folds into the MHD domain; the sequence is NNEAYFDVIE…ITKAGKFQVR (242 aa).

Belongs to the adaptor complexes medium subunit family. The AP-3 complex associates with the BLOC-1 complex.

Its subcellular location is the golgi apparatus. It localises to the cytoplasmic vesicle membrane. Functionally, part of the AP-3 complex, an adaptor-related complex which is not clathrin-associated. The complex is associated with the Golgi region as well as more peripheral structures. It facilitates the budding of vesicles from the Golgi membrane and may be directly involved in trafficking to lysosomes. In concert with the BLOC-1 complex, AP-3 is required to target cargos into vesicles assembled at cell bodies for delivery into neurites and nerve terminals. The polypeptide is AP-3 complex subunit mu-1 (AP3M1) (Gallus gallus (Chicken)).